Consider the following 345-residue polypeptide: Methionine import ATP-binding protein MetN (345 aa).

The ABC transporter domain maps to 2–241 (IKLKNISKIF…PKTELAQEFI (240 aa)). 38–45 (GASGAGKS) is a binding site for ATP.

Belongs to the ABC transporter superfamily. Methionine importer (TC 3.A.1.24) family. The complex is composed of two ATP-binding proteins (MetN), two transmembrane proteins (MetI) and a solute-binding protein (MetQ).

Its subcellular location is the cell inner membrane. The enzyme catalyses L-methionine(out) + ATP + H2O = L-methionine(in) + ADP + phosphate + H(+). The catalysed reaction is D-methionine(out) + ATP + H2O = D-methionine(in) + ADP + phosphate + H(+). Part of the ABC transporter complex MetNIQ involved in methionine import. Responsible for energy coupling to the transport system. The polypeptide is Methionine import ATP-binding protein MetN (Mannheimia succiniciproducens (strain KCTC 0769BP / MBEL55E)).